The following is a 169-amino-acid chain: ATP synthase subunit b, sodium ion specific (169 aa).

Residues 5 to 27 (SFISLDWGVVFQIVNTIVMYLIL) form a helical membrane-spanning segment.

Belongs to the ATPase B chain family. In terms of assembly, F-type ATPases have 2 components, F(1) - the catalytic core - and F(0) - the membrane proton channel. F(1) has five subunits: alpha(3), beta(3), gamma(1), delta(1), epsilon(1). F(0) has three main subunits: a(1), b(2) and c(10-14). The alpha and beta chains form an alternating ring which encloses part of the gamma chain. F(1) is attached to F(0) by a central stalk formed by the gamma and epsilon chains, while a peripheral stalk is formed by the delta and b chains.

The protein localises to the cell membrane. In terms of biological role, f(1)F(0) ATP synthase produces ATP from ADP in the presence of a proton or sodium gradient. F-type ATPases consist of two structural domains, F(1) containing the extramembraneous catalytic core and F(0) containing the membrane proton channel, linked together by a central stalk and a peripheral stalk. During catalysis, ATP synthesis in the catalytic domain of F(1) is coupled via a rotary mechanism of the central stalk subunits to proton translocation. Component of the F(0) channel, it forms part of the peripheral stalk, linking F(1) to F(0). Its function is as follows. In this organism this enzyme may function as an ATP-driven Na(+) ion pump to generate a Na(+) ion electrochemical gradient rather than as an ATP synthase. The chain is ATP synthase subunit b, sodium ion specific (atpF) from Clostridium paradoxum.